A 394-amino-acid polypeptide reads, in one-letter code: GDNF family receptor alpha-like (394 aa).

Residues 1-19 (MLVFIFLAVRLSSENESSS) form the signal peptide. Over 20-350 (QTNDCAYFMR…LTGFNSPFSG (331 aa)) the chain is Extracellular. N-linked (GlcNAc...) asparagine glycans are attached at residues Asn65, Asn101, and Asn115. 11 disulfides stabilise this stretch: Cys132/Cys190, Cys139/Cys145, Cys156/Cys168, Cys163/Cys211, Cys192/Cys199, Cys221/Cys292, Cys228/Cys234, Cys245/Cys276, Cys253/Cys259, Cys270/Cys317, and Cys294/Cys305. The interval 150 to 229 (ALYLKACTAN…TCLSVIHTCR (80 aa)) is required for interaction with GDF15. The helical transmembrane segment at 351–371 (ELIYVVVCMVVTSGILSLVML) threads the bilayer. Over 372 to 394 (KLRIPSKKRDPAPIEIAGAVIIQ) the chain is Cytoplasmic.

The protein belongs to the GDNFR family. Interacts (via the extracellular domain) with GDF15 and RET; receptor of GDF15, mediates cellular signaling through interaction with RET after GDF15-binding. Interaction with RET requires previous GDF15-binding. Cleaved and inactivated by MMP14, inhibiting the GDF15-GFRAL aversive response. In terms of tissue distribution, expressed in the brainstem, restricted to cells in the area postrema and the immediately adjacent region of the nucleus tractus solitarius. Detected at low levels in testis.

The protein resides in the cell membrane. Functionally, brainstem-restricted receptor for GDF15 hormone, which triggers an aversive response, characterized by nausea, vomiting, and/or loss of appetite in response to various stresses. The aversive response is both required to reduce continuing exposure to those stresses at the time of exposure and to promote avoidance behavior in the future. The GDF15-GFRAL aversive response is triggered by stresses, such as anticancer drugs (camptothecin or cisplatin), cancers or drugs such as metformin. Upon interaction with its ligand, GDF15, mediates the GDF15-induced autophosphorylation and activation of the RET tyrosine kinase receptor, leading to activation of MAPK- and AKT- signaling pathways. Ligand-binding activates GFRAL-expressing neurons localized in the area postrema and nucleus tractus solitarius of the brainstem. The GDF15-GFRAL signal induces expression of genes involved in metabolism, such as lipid metabolism in adipose tissues. The polypeptide is GDNF family receptor alpha-like (Rattus norvegicus (Rat)).